The chain runs to 608 residues: Developmental regulatory protein wetA (608 aa).

7 disordered regions span residues 54 to 88 (ADHH…GVST), 102 to 125 (VDAT…VDPR), 146 to 186 (VSMS…MTRK), 202 to 226 (SKLR…NPPR), 309 to 352 (WPHQ…HAVP), 447 to 544 (AQTY…GDIG), and 556 to 576 (LMTG…EREA). 3 stretches are compositionally biased toward low complexity: residues 77–88 (ESTASASSGVST), 107–119 (PSQP…PGAS), and 163–175 (SSPG…SQPS). Over residues 313–338 (QHPHPHPHPHHPQAHTHPHPHPHPHP) the composition is skewed to basic residues. Composition is skewed to low complexity over residues 339–350 (HQQAVAGHPQHA) and 502–517 (SSNG…SGRG).

This sequence belongs to the wetA family.

AbaA and wetA are pivotal regulators of conidiophore development and conidium maturation. They act individually and together to regulate their own expression and that of numerous other sporulation-specific genes. Functions to maintain conidial dormancy by suppressing microcycle conidiation. The protein is Developmental regulatory protein wetA of Gibberella zeae (strain ATCC MYA-4620 / CBS 123657 / FGSC 9075 / NRRL 31084 / PH-1) (Wheat head blight fungus).